A 129-amino-acid polypeptide reads, in one-letter code: Small ribosomal subunit protein uS11 (129 aa).

It belongs to the universal ribosomal protein uS11 family. Part of the 30S ribosomal subunit. Interacts with proteins S7 and S18. Binds to IF-3.

Its function is as follows. Located on the platform of the 30S subunit, it bridges several disparate RNA helices of the 16S rRNA. Forms part of the Shine-Dalgarno cleft in the 70S ribosome. The polypeptide is Small ribosomal subunit protein uS11 (Haemophilus influenzae (strain 86-028NP)).